We begin with the raw amino-acid sequence, 435 residues long: Metacaspase-1A (435 aa).

Disordered stretches follow at residues 1–46 (MQNH…APPP) and 106–129 (YQNP…VAFG). Positions 36-46 (SPQPGYGAPPP) are enriched in pro residues. Active-site residues include histidine 231 and cysteine 287.

Belongs to the peptidase C14B family.

Involved in cell death (apoptosis). This Neosartorya fischeri (strain ATCC 1020 / DSM 3700 / CBS 544.65 / FGSC A1164 / JCM 1740 / NRRL 181 / WB 181) (Aspergillus fischerianus) protein is Metacaspase-1A (casA).